We begin with the raw amino-acid sequence, 136 residues long: MAANATSGRPPSIALRQPEATGWRRGIPAKVATKGTQAEREGDVRSGGRARGRCVRLAKRCSPSSLGLRRRRRRTGGRQGDPQIFLGSDFRLLTPANSNPVLENPARTGSRIVIGISRERNLPFCGRSNLPDVSSL.

The disordered stretch occupies residues 1 to 51; sequence MAANATSGRPPSIALRQPEATGWRRGIPAKVATKGTQAEREGDVRSGGRAR. The segment covering 37-46 has biased composition (basic and acidic residues); the sequence is QAEREGDVRS.

This is an uncharacterized protein from Homo sapiens (Human).